The primary structure comprises 154 residues: 6,7-dimethyl-8-ribityllumazine synthase (154 aa).

5-amino-6-(D-ribitylamino)uracil contacts are provided by residues Phe22, 56-58 (AFE), and 80-82 (AVI). A (2S)-2-hydroxy-3-oxobutyl phosphate-binding site is contributed by 85-86 (AT). The Proton donor role is filled by His88. Phe113 is a 5-amino-6-(D-ribitylamino)uracil binding site. Residue Arg127 participates in (2S)-2-hydroxy-3-oxobutyl phosphate binding.

This sequence belongs to the DMRL synthase family.

It catalyses the reaction (2S)-2-hydroxy-3-oxobutyl phosphate + 5-amino-6-(D-ribitylamino)uracil = 6,7-dimethyl-8-(1-D-ribityl)lumazine + phosphate + 2 H2O + H(+). It functions in the pathway cofactor biosynthesis; riboflavin biosynthesis; riboflavin from 2-hydroxy-3-oxobutyl phosphate and 5-amino-6-(D-ribitylamino)uracil: step 1/2. Its function is as follows. Catalyzes the formation of 6,7-dimethyl-8-ribityllumazine by condensation of 5-amino-6-(D-ribitylamino)uracil with 3,4-dihydroxy-2-butanone 4-phosphate. This is the penultimate step in the biosynthesis of riboflavin. This Desulfitobacterium hafniense (strain DSM 10664 / DCB-2) protein is 6,7-dimethyl-8-ribityllumazine synthase.